We begin with the raw amino-acid sequence, 372 residues long: Phospho-N-acetylmuramoyl-pentapeptide-transferase (372 aa).

10 helical membrane-spanning segments follow: residues 2-22, 71-91, 98-118, 134-154, 176-196, 211-231, 251-271, 275-295, 300-320, and 349-369; these read LVWLFSWLGHYYAPFYAVSSL, TPTMGGVLILSAIGVSTLLWA, VWILLIVMIIFGAVGWADDWL, YFWLSMGALFVGISLYYIATL, MIPFSAVPFGIGFIIFTYFVI, GLAILPVVLVAAGLGAMAYVS, VIIVCGAMIGAGLGFLWFNAH, VFMGDVGALSLGAMLGTIAVM, IAFAIMGGLFVAEALSVMLQV, and QVVARFWIIAIILVILGLMTL.

The protein belongs to the glycosyltransferase 4 family. MraY subfamily. The cofactor is Mg(2+).

It is found in the cell inner membrane. It carries out the reaction UDP-N-acetyl-alpha-D-muramoyl-L-alanyl-gamma-D-glutamyl-meso-2,6-diaminopimeloyl-D-alanyl-D-alanine + di-trans,octa-cis-undecaprenyl phosphate = di-trans,octa-cis-undecaprenyl diphospho-N-acetyl-alpha-D-muramoyl-L-alanyl-D-glutamyl-meso-2,6-diaminopimeloyl-D-alanyl-D-alanine + UMP. It participates in cell wall biogenesis; peptidoglycan biosynthesis. Functionally, catalyzes the initial step of the lipid cycle reactions in the biosynthesis of the cell wall peptidoglycan: transfers peptidoglycan precursor phospho-MurNAc-pentapeptide from UDP-MurNAc-pentapeptide onto the lipid carrier undecaprenyl phosphate, yielding undecaprenyl-pyrophosphoryl-MurNAc-pentapeptide, known as lipid I. The chain is Phospho-N-acetylmuramoyl-pentapeptide-transferase from Psychrobacter cryohalolentis (strain ATCC BAA-1226 / DSM 17306 / VKM B-2378 / K5).